A 284-amino-acid polypeptide reads, in one-letter code: MLLATFKLCAGSSYRHMRNMKGLRHQAVLAIGQELNRRALGDPSPGWMGQVRRRSSLLGSQLEATLYSDQELSYIQQGEEAMQKALGILNNQEGWKKESQQENGDEVLSKVVPGVGKVFRLEVLLDQPMDRLYEELVDRMEAMGEWNPNVKEIKVLKKIGKDTVITHELAAAAAGNLVGPRDFVSVRCTKRRGSTCVLAGMATHFGEMPEQSGVIRAEHGPTCMVLHPLAGSPSKTKLTWLLSIDLKGWLPKTIINQVLSQTQIEFASHLRKRLESSPASEAQC.

A mitochondrion-targeting transit peptide spans 1–62 (MLLATFKLCA…RRSSLLGSQL (62 aa)). Residues serine 56 and serine 194 each carry the phosphoserine; by PKA modification. One can recognise an START domain in the interval 66–279 (LYSDQELSYI…LRKRLESSPA (214 aa)).

As to quaternary structure, may interact with TSPO.

The protein resides in the mitochondrion. The catalysed reaction is cholesterol(in) = cholesterol(out). It functions in the pathway steroid metabolism; cholesterol metabolism. Plays a key role in steroid hormone synthesis by enhancing the metabolism of cholesterol into pregnenolone. Mediates the transfer of cholesterol from the outer mitochondrial membrane to the inner mitochondrial membrane where it is cleaved to pregnenolone. The protein is Steroidogenic acute regulatory protein, mitochondrial (Star) of Rattus norvegicus (Rat).